The sequence spans 309 residues: Sulfate adenylyltransferase subunit 2 (309 aa).

Belongs to the PAPS reductase family. CysD subfamily. Heterodimer composed of CysD, the smaller subunit, and CysN.

It carries out the reaction sulfate + ATP + H(+) = adenosine 5'-phosphosulfate + diphosphate. The protein operates within sulfur metabolism; hydrogen sulfide biosynthesis; sulfite from sulfate: step 1/3. Functionally, with CysN forms the ATP sulfurylase (ATPS) that catalyzes the adenylation of sulfate producing adenosine 5'-phosphosulfate (APS) and diphosphate, the first enzymatic step in sulfur assimilation pathway. APS synthesis involves the formation of a high-energy phosphoric-sulfuric acid anhydride bond driven by GTP hydrolysis by CysN coupled to ATP hydrolysis by CysD. The polypeptide is Sulfate adenylyltransferase subunit 2 (Methylorubrum populi (strain ATCC BAA-705 / NCIMB 13946 / BJ001) (Methylobacterium populi)).